We begin with the raw amino-acid sequence, 326 residues long: (+)-T-muurolol synthase ((2E,6E)-farnesyl diphosphate cyclizing) (326 aa).

Mg(2+)-binding residues include Asp-81 and Asp-85. Residues 81–85 (DDQCD) carry the DDXXD motif motif. Residue Arg-175 coordinates substrate. Residues Asn-221 and Ser-225 each coordinate Mg(2+). Lys-228 is a binding site for substrate. Glu-229 is a Mg(2+) binding site. 309–310 (RY) is a substrate binding site.

The protein belongs to the terpene synthase family. It depends on Mg(2+) as a cofactor.

The catalysed reaction is (2E,6E)-farnesyl diphosphate + H2O = (+)-T-muurolol + diphosphate. It functions in the pathway secondary metabolite biosynthesis; terpenoid biosynthesis. Functionally, catalyzes the conversion of (2E,6E)-farnesyl diphosphate (FPP) into (+)-T-muurolol via a 1,10-cyclization, which requires isomerization of FPP to nerolidyl diphosphate (NPP) and then abstraction of the pyrophosphate from intermediate NPP leading to a (E,Z)-germacradienyl (helminthogermacradienyl) cation. This chain is (+)-T-muurolol synthase ((2E,6E)-farnesyl diphosphate cyclizing), found in Roseiflexus castenholzii (strain DSM 13941 / HLO8).